The chain runs to 263 residues: Cytochrome c oxidase subunit 3 (263 aa).

7 helical membrane passes run P9–L29, F40–W60, G84–F104, I129–A149, A161–Y181, T198–L218, and A241–W261.

It belongs to the cytochrome c oxidase subunit 3 family. In terms of assembly, component of the cytochrome c oxidase (complex IV, CIV), a multisubunit enzyme composed of a catalytic core of 3 subunits and several supernumerary subunits. The complex exists as a monomer or a dimer and forms supercomplexes (SCs) in the inner mitochondrial membrane with ubiquinol-cytochrome c oxidoreductase (cytochrome b-c1 complex, complex III, CIII).

It localises to the mitochondrion inner membrane. It carries out the reaction 4 Fe(II)-[cytochrome c] + O2 + 8 H(+)(in) = 4 Fe(III)-[cytochrome c] + 2 H2O + 4 H(+)(out). In terms of biological role, component of the cytochrome c oxidase, the last enzyme in the mitochondrial electron transport chain which drives oxidative phosphorylation. The respiratory chain contains 3 multisubunit complexes succinate dehydrogenase (complex II, CII), ubiquinol-cytochrome c oxidoreductase (cytochrome b-c1 complex, complex III, CIII) and cytochrome c oxidase (complex IV, CIV), that cooperate to transfer electrons derived from NADH and succinate to molecular oxygen, creating an electrochemical gradient over the inner membrane that drives transmembrane transport and the ATP synthase. Cytochrome c oxidase is the component of the respiratory chain that catalyzes the reduction of oxygen to water. Electrons originating from reduced cytochrome c in the intermembrane space (IMS) are transferred via the dinuclear copper A center (CU(A)) of subunit 2 and heme A of subunit 1 to the active site in subunit 1, a binuclear center (BNC) formed by heme A3 and copper B (CU(B)). The BNC reduces molecular oxygen to 2 water molecules using 4 electrons from cytochrome c in the IMS and 4 protons from the mitochondrial matrix. In Locusta migratoria (Migratory locust), this protein is Cytochrome c oxidase subunit 3 (COIII).